A 378-amino-acid chain; its full sequence is Protein RecA (378 aa).

ATP is bound at residue 66 to 73 (GPESSGKT). Positions 333 to 378 (PDAAKAEAATDAAAAADTAGTDDAAKSVPAPASKTAKATKATAVKS) are disordered. The segment covering 338 to 378 (AEAATDAAAAADTAGTDDAAKSVPAPASKTAKATKATAVKS) has biased composition (low complexity).

It belongs to the RecA family.

The protein localises to the cytoplasm. Can catalyze the hydrolysis of ATP in the presence of single-stranded DNA, the ATP-dependent uptake of single-stranded DNA by duplex DNA, and the ATP-dependent hybridization of homologous single-stranded DNAs. It interacts with LexA causing its activation and leading to its autocatalytic cleavage. In Streptomyces venezuelae (strain ATCC 10712 / CBS 650.69 / DSM 40230 / JCM 4526 / NBRC 13096 / PD 04745), this protein is Protein RecA.